The primary structure comprises 390 residues: Putative RING-H2 finger protein ATL12 (390 aa).

The signal sequence occupies residues 1 to 22 (MNSPQEISILFFFIIFLDYVSA). A helical membrane pass occupies residues 41-61 (LAIITGVFSIVFTLTFVLLVY). The segment at 124–166 (CSVCLSKFEDVEILRLLPKCRHAFHIGCIDQWLEQHATCPLCR) adopts an RING-type; atypical zinc-finger fold.

This sequence belongs to the RING-type zinc finger family. ATL subfamily.

Its subcellular location is the membrane. It catalyses the reaction S-ubiquitinyl-[E2 ubiquitin-conjugating enzyme]-L-cysteine + [acceptor protein]-L-lysine = [E2 ubiquitin-conjugating enzyme]-L-cysteine + N(6)-ubiquitinyl-[acceptor protein]-L-lysine.. It functions in the pathway protein modification; protein ubiquitination. The protein is Putative RING-H2 finger protein ATL12 (ATL12) of Arabidopsis thaliana (Mouse-ear cress).